Here is a 417-residue protein sequence, read N- to C-terminus: MLNLGRARTGRQNRSMSFEGLDFADPKKNNNYMGKIVLVMTLTAMCILLLNQSPTFNTPSVFSRSEPGVTHVLVTGGAGYIGSHAALRLLKDSYRVTIVDNLSRGNLGAVKILQQLFPEPGKLQFIYADLGDANAVNKIFSENAFDAVMHFAAVAYVGESTQFPLKYYHNITSNTLVVLETMAAHGVKTLIYSSTCATYGEPEKMPITEETPQVPINPYGKAKKMAEDIILDFSKNSIMAVMILRYFNVIGSDPEGRLGEAPRPELSEHGRISGACFDAARGIIPGLQIKGTDYKTVDGTCVRDYIDVTDLVDAHVKALEKAKPRKVGIFNVGTGKGSSVKEFVEACKKATGVDIKVDYLERRAGDYAEVYSDPRKIKEELNWTAKHTNLQESLKMAWRWQKLHRSGYGSSSLVSAY.

The Cytoplasmic portion of the chain corresponds to 1-31; it reads MLNLGRARTGRQNRSMSFEGLDFADPKKNNN. A helical; Signal-anchor for type II membrane protein membrane pass occupies residues 32–54; that stretch reads YMGKIVLVMTLTAMCILLLNQSP. Topologically, residues 55-417 are lumenal; sequence TFNTPSVFSR…YGSSSLVSAY (363 aa). 71-102 lines the NAD(+) pocket; it reads HVLVTGGAGYIGSHAALRLLKDSYRVTIVDNL. Tyr219 functions as the Proton acceptor in the catalytic mechanism.

It belongs to the NAD(P)-dependent epimerase/dehydratase family. NAD(+) is required as a cofactor.

The protein resides in the golgi apparatus. It localises to the golgi stack membrane. It carries out the reaction UDP-beta-L-arabinopyranose = UDP-alpha-D-xylose. Its pathway is nucleotide-sugar biosynthesis; UDP-L-arabinose biosynthesis; UDP-L-arabinose from UDP-alpha-D-xylose: step 1/1. It participates in cell wall biogenesis; cell wall polysaccharide biosynthesis. The chain is Putative UDP-arabinose 4-epimerase 2 from Arabidopsis thaliana (Mouse-ear cress).